The sequence spans 994 residues: Transposase for transposon Tn2501 (994 aa).

This sequence belongs to the transposase 7 family.

In terms of biological role, required for transposition of transposon Tn2501. This is Transposase for transposon Tn2501 (tnpA) from Escherichia coli.